The sequence spans 435 residues: Probable glycine dehydrogenase (decarboxylating) subunit 1 (435 aa).

This sequence belongs to the GcvP family. N-terminal subunit subfamily. In terms of assembly, the glycine cleavage system is composed of four proteins: P, T, L and H. In this organism, the P 'protein' is a heterodimer of two subunits.

It catalyses the reaction N(6)-[(R)-lipoyl]-L-lysyl-[glycine-cleavage complex H protein] + glycine + H(+) = N(6)-[(R)-S(8)-aminomethyldihydrolipoyl]-L-lysyl-[glycine-cleavage complex H protein] + CO2. Functionally, the glycine cleavage system catalyzes the degradation of glycine. The P protein binds the alpha-amino group of glycine through its pyridoxal phosphate cofactor; CO(2) is released and the remaining methylamine moiety is then transferred to the lipoamide cofactor of the H protein. This Coprothermobacter proteolyticus (strain ATCC 35245 / DSM 5265 / OCM 4 / BT) protein is Probable glycine dehydrogenase (decarboxylating) subunit 1.